The sequence spans 581 residues: Invertase (581 aa).

Residues 1–22 (MFLKYILASGICLVSLLSSTNA) form the signal peptide. N37, N40, N46, N57, N62, and N79 each carry an N-linked (GlcNAc...) asparagine glycan. Substrate is bound by residues 94-97 (FMND), Q113, and 158-159 (FS). D97 is an active-site residue. N-linked (GlcNAc...) asparagine glycans are attached at residues N168 and N175. Residues 227–228 (RD) and E280 each bind substrate. N-linked (GlcNAc...) asparagine glycosylation is present at N322. Position 366 (W366) interacts with substrate. N-linked (GlcNAc...) asparagine glycosylation is found at N399, N409, N425, N446, N452, N519, and N569.

It belongs to the glycosyl hydrolase 32 family. In terms of processing, glycosylated; contains 67% carbohydrates. This is composed of equimolar amounts of mannose and galactose. There is also a small amount of glucosamine present.

The catalysed reaction is Hydrolysis of terminal non-reducing beta-D-fructofuranoside residues in beta-D-fructofuranosides.. This Schizosaccharomyces pombe (strain 972 / ATCC 24843) (Fission yeast) protein is Invertase (inv1).